We begin with the raw amino-acid sequence, 432 residues long: Ciliated left-right organizer protein containing ZP-N domains homolog (432 aa).

In terms of tissue distribution, expressed specifically by cells of the ciliated left-right organizer.

This is Ciliated left-right organizer protein containing ZP-N domains homolog (ciroz) from Danio rerio (Zebrafish).